The chain runs to 463 residues: Chromosomal replication initiator protein DnaA (463 aa).

The segment at 1-84 is domain I, interacts with DnaA modulators; that stretch reads MNTNQIILTN…QLFQHYNNAI (84 aa). Residues 84–124 are domain II; that stretch reads IKTVEIITKELPASNQATLELPTKTFADIGSSELNSENIFS. Positions 125–343 are domain III, AAA+ region; it reads TFDIRFTFDN…GALNKVIAHS (219 aa). ATP-binding residues include glycine 171, glycine 173, lysine 174, and threonine 175. Residues 344 to 463 are domain IV, binds dsDNA; the sequence is NFTAKEITLE…INLMMKILQN (120 aa).

It belongs to the DnaA family. In terms of assembly, oligomerizes as a right-handed, spiral filament on DNA at oriC.

The protein resides in the cytoplasm. In terms of biological role, plays an essential role in the initiation and regulation of chromosomal replication. ATP-DnaA binds to the origin of replication (oriC) to initiate formation of the DNA replication initiation complex once per cell cycle. Binds the DnaA box (a 9 base pair repeat at the origin) and separates the double-stranded (ds)DNA. Forms a right-handed helical filament on oriC DNA; dsDNA binds to the exterior of the filament while single-stranded (ss)DNA is stabiized in the filament's interior. The ATP-DnaA-oriC complex binds and stabilizes one strand of the AT-rich DNA unwinding element (DUE), permitting loading of DNA polymerase. After initiation quickly degrades to an ADP-DnaA complex that is not apt for DNA replication. Binds acidic phospholipids. The protein is Chromosomal replication initiator protein DnaA of Rickettsia bellii (strain OSU 85-389).